A 331-amino-acid polypeptide reads, in one-letter code: Probable tRNA pseudouridine synthase B (331 aa).

The span at 1-15 (MRCSQREVFVKREEP) shows a compositional bias: basic and acidic residues. A disordered region spans residues 1-27 (MRCSQREVFVKREEPTNPEWGKPPSQR). Catalysis depends on aspartate 71, which acts as the Nucleophile. Positions 238–313 (LPKIWVRDSA…AVVRTDRVVM (76 aa)) constitute a PUA domain.

This sequence belongs to the pseudouridine synthase TruB family. Type 2 subfamily.

The catalysed reaction is uridine(55) in tRNA = pseudouridine(55) in tRNA. Its function is as follows. Could be responsible for synthesis of pseudouridine from uracil-55 in the psi GC loop of transfer RNAs. The polypeptide is Probable tRNA pseudouridine synthase B (Pyrobaculum arsenaticum (strain DSM 13514 / JCM 11321 / PZ6)).